A 250-amino-acid chain; its full sequence is 2,3-bisphosphoglycerate-dependent phosphoglycerate mutase (250 aa).

Substrate-binding positions include Arg10 to Asn17, Thr23 to Gly24, Arg62, Glu89 to Tyr92, Lys100, Arg116 to Arg117, and Gly185 to Asn186. Catalysis depends on His11, which acts as the Tele-phosphohistidine intermediate. Glu89 serves as the catalytic Proton donor/acceptor.

The protein belongs to the phosphoglycerate mutase family. BPG-dependent PGAM subfamily. In terms of assembly, homodimer.

It catalyses the reaction (2R)-2-phosphoglycerate = (2R)-3-phosphoglycerate. It functions in the pathway carbohydrate degradation; glycolysis; pyruvate from D-glyceraldehyde 3-phosphate: step 3/5. Functionally, catalyzes the interconversion of 2-phosphoglycerate and 3-phosphoglycerate. This chain is 2,3-bisphosphoglycerate-dependent phosphoglycerate mutase, found in Cronobacter sakazakii (strain ATCC BAA-894) (Enterobacter sakazakii).